The following is a 132-amino-acid chain: Small ribosomal subunit protein uS9 (132 aa).

A disordered region spans residues 100 to 132 (LKSNGLLTRDDRTKERKKPGLKRARKAPQYTKR). Basic residues predominate over residues 114–132 (ERKKPGLKRARKAPQYTKR).

Belongs to the universal ribosomal protein uS9 family.

In Dehalococcoides mccartyi (strain ATCC BAA-2100 / JCM 16839 / KCTC 5957 / BAV1), this protein is Small ribosomal subunit protein uS9.